We begin with the raw amino-acid sequence, 947 residues long: Ionotropic receptor 25a (947 aa).

Residues 1–30 form the signal peptide; the sequence is MILMNPKTSKILWLLGFLSLLSSFSLEIAA. Residues 31–562 are Extracellular-facing; sequence QTTQNINVLF…SLFKFLTVLE (532 aa). N78, N177, N277, and N434 each carry an N-linked (GlcNAc...) asparagine glycan. A helical membrane pass occupies residues 563 to 583; sequence TNVWLCILAAYFFTSFLMWIF. Over 584–641 the chain is Cytoplasmic; it reads DRWSPYSYQNNREKYKDDEEKREFNLKECLWFCMTSLTPQGGGEAPKNLSGRLVAATW. The chain crosses the membrane as a helical span at residues 642-662; it reads WLFGFIIIASYTANLAAFLTV. Over 663–858 the chain is Extracellular; sequence SRLDTPVESL…DQSDGISIQN (196 aa). Residues N687, N715, and N762 are each glycosylated (N-linked (GlcNAc...) asparagine). A helical transmembrane segment spans residues 859–879; it reads IGGVFIVIFVGIGMACITLVF. Over 880-947 the chain is Cytoplasmic; it reads EYWWYRYRKN…QYPATFKPRF (68 aa).

This sequence belongs to the glutamate-gated ion channel (TC 1.A.10.1) family. Interacts with nocte. In terms of tissue distribution, in the antenna, detected in neurons of the arista and also detected in sacculus neurons which innervate the first and second chambers (at protein level). Throughout the main body of the antenna, expressed in neurons which innervate the coeloconic class of olfactory sensilla (at protein level). Expressed in multiple cells of the dorsal organ including the dorsal organ cool cells (at protein level). Detected in femur and retina. Expressed in a subset of femur chordonotal neurons and antennal Johnston's Organ neurons.

The protein localises to the cell membrane. Its subcellular location is the cell projection. The protein resides in the axon. It localises to the dendrite. It is found in the perikaryon. The protein localises to the cilium. Functionally, integral part of various neural sensory systems in the antenna that provide the neural basis for the response to environmental changes in temperature (thermosensation), humidity (hygrosensation) and odor detection. Required for odor-evoked electrophysiological responses in multiple neuron classes in the antenna and is likely to function as part of an olfactory receptor complex with Ir76a and Ir76b. Together with Ir21a and Ir93a, mediates the response of the larval dorsal organ cool cells, a trio of cool-responsive neurons, to cooling and is required for cool avoidance behavior. Required in chordonotal organ neurons for behavioral synchronization to low-amplitude temperature cycles and mediates circadian clock resetting by temperature. Together with Ir40a and Ir93a, mediates the response of the hydrosensory sacculus neurons to changes in relative humidity, and is required for dry detection and humidiy preference behavior. The protein is Ionotropic receptor 25a of Drosophila melanogaster (Fruit fly).